The primary structure comprises 67 residues: V-type proton ATPase subunit e (67 aa).

The Lumenal segment spans residues Met-1–Gly-2. A helical membrane pass occupies residues Gly-3–Val-23. At Ser-24–Met-35 the chain is on the cytoplasmic side. The chain crosses the membrane as a helical span at residues Ser-36–Leu-56. Topologically, residues His-57–Glu-67 are lumenal.

This sequence belongs to the V-ATPase e1/e2 subunit family. In terms of assembly, V-ATPase is a heteromultimeric enzyme composed of a peripheral catalytic V1 complex (components A to H) attached to an integral membrane V0 proton pore complex (components: a, c, c', c'', d, e, f and VOA1).

Its subcellular location is the vacuole membrane. Its function is as follows. Subunit of the V0 complex of vacuolar(H+)-ATPase (V-ATPase), a multisubunit enzyme composed of a peripheral complex (V1) that hydrolyzes ATP and a membrane integral complex (V0) that translocates protons. V-ATPase is responsible for acidifying and maintaining the pH of intracellular compartments. This chain is V-type proton ATPase subunit e (vma9), found in Schizosaccharomyces pombe (strain 972 / ATCC 24843) (Fission yeast).